The following is a 352-amino-acid chain: MSEPQSWSVMASQMTSAQLIRVYLDGSMGIGKTSMLNEIPTHSLMGVPVLKVFEPMKYWRYYFTDLVTTVNDTCDRRRRGEFSLFQSSMIVTALQSKFADPYLVFHERLSSKCHRITGTRGNPSLILILDRHPISATVCFPIARHLTGDCSLEMLISMIIRLPQEPPGCNLVIVDLHDEKEHVSRLSSRNRTGEKTDLLMLRALNAVYSCLVDTIMYANHICPYSKDEWESEWLDLPWFDTSLATTFINEPRTDYRGSRVSLHHTLLAIFKRRELCAEDGSLSTTHAWILWGLLMKLRNINVERFNITGLSTTKCVESFMDTMSERLVTHMSWNDAFEIEADVLAYNKEMAM.

26–33 contacts ATP; it reads GSMGIGKT. Glu-54 (proton acceptor) is an active-site residue. Substrate is bound at residue Gln-95. Arg-185 is a binding site for ATP. Arg-191 is a binding site for substrate.

Belongs to the herpesviridae thymidine kinase family. Homodimer.

The catalysed reaction is thymidine + ATP = dTMP + ADP + H(+). Functionally, catalyzes the transfer of the gamma-phospho group of ATP to thymidine to generate dTMP in the salvage pathway of pyrimidine synthesis. The dTMP serves as a substrate for DNA polymerase during viral DNA replication. Allows the virus to be reactivated and to grow in non-proliferative cells lacking a high concentration of phosphorylated nucleic acid precursors. The chain is Thymidine kinase from Gallid herpesvirus 2 (strain Chicken/Md5/ATCC VR-987) (GaHV-2).